We begin with the raw amino-acid sequence, 258 residues long: Acyl-[acyl-carrier-protein]--UDP-N-acetylglucosamine O-acyltransferase (258 aa).

Belongs to the transferase hexapeptide repeat family. LpxA subfamily. As to quaternary structure, homotrimer.

The protein localises to the cytoplasm. The catalysed reaction is a (3R)-hydroxyacyl-[ACP] + UDP-N-acetyl-alpha-D-glucosamine = a UDP-3-O-[(3R)-3-hydroxyacyl]-N-acetyl-alpha-D-glucosamine + holo-[ACP]. It participates in glycolipid biosynthesis; lipid IV(A) biosynthesis; lipid IV(A) from (3R)-3-hydroxytetradecanoyl-[acyl-carrier-protein] and UDP-N-acetyl-alpha-D-glucosamine: step 1/6. Functionally, involved in the biosynthesis of lipid A, a phosphorylated glycolipid that anchors the lipopolysaccharide to the outer membrane of the cell. The polypeptide is Acyl-[acyl-carrier-protein]--UDP-N-acetylglucosamine O-acyltransferase (Saccharophagus degradans (strain 2-40 / ATCC 43961 / DSM 17024)).